The primary structure comprises 161 residues: Nucleotide-binding protein Bpro_1596 (161 aa).

It belongs to the YajQ family.

Nucleotide-binding protein. This chain is Nucleotide-binding protein Bpro_1596, found in Polaromonas sp. (strain JS666 / ATCC BAA-500).